The chain runs to 219 residues: 7-carboxy-7-deazaguanine synthase (219 aa).

Substrate is bound by residues 12–14 (IQG) and Arg27. The Radical SAM core domain maps to 18 to 219 (YTGTPSIFIR…VQIHKYLKIR (202 aa)). [4Fe-4S] cluster-binding residues include Cys31, Cys35, and Cys38. Thr40 provides a ligand contact to Mg(2+). Thr92 contributes to the substrate binding site. S-adenosyl-L-methionine-binding positions include Gly94 and 136–138 (SPK).

This sequence belongs to the radical SAM superfamily. 7-carboxy-7-deazaguanine synthase family. As to quaternary structure, homodimer. The cofactor is [4Fe-4S] cluster. It depends on S-adenosyl-L-methionine as a cofactor. Mg(2+) serves as cofactor.

It carries out the reaction 6-carboxy-5,6,7,8-tetrahydropterin + H(+) = 7-carboxy-7-deazaguanine + NH4(+). The protein operates within purine metabolism; 7-cyano-7-deazaguanine biosynthesis. Catalyzes the complex heterocyclic radical-mediated conversion of 6-carboxy-5,6,7,8-tetrahydropterin (CPH4) to 7-carboxy-7-deazaguanine (CDG), a step common to the biosynthetic pathways of all 7-deazapurine-containing compounds. In Buchnera aphidicola subsp. Schizaphis graminum (strain Sg), this protein is 7-carboxy-7-deazaguanine synthase.